The sequence spans 506 residues: Histidine ammonia-lyase (506 aa).

Positions 143-145 (ASG) form a cross-link, 5-imidazolinone (Ala-Gly). Residue S144 is modified to 2,3-didehydroalanine (Ser).

Belongs to the PAL/histidase family. Post-translationally, contains an active site 4-methylidene-imidazol-5-one (MIO), which is formed autocatalytically by cyclization and dehydration of residues Ala-Ser-Gly.

Its subcellular location is the cytoplasm. It carries out the reaction L-histidine = trans-urocanate + NH4(+). Its pathway is amino-acid degradation; L-histidine degradation into L-glutamate; N-formimidoyl-L-glutamate from L-histidine: step 1/3. The sequence is that of Histidine ammonia-lyase from Salmonella paratyphi B (strain ATCC BAA-1250 / SPB7).